Reading from the N-terminus, the 194-residue chain is Small ribosomal subunit protein uS7 (194 aa).

It belongs to the universal ribosomal protein uS7 family. Part of the 30S ribosomal subunit.

One of the primary rRNA binding proteins, it binds directly to 16S rRNA where it nucleates assembly of the head domain of the 30S subunit. Is located at the subunit interface close to the decoding center. This chain is Small ribosomal subunit protein uS7, found in Methanocorpusculum labreanum (strain ATCC 43576 / DSM 4855 / Z).